The chain runs to 271 residues: Thiazole synthase (271 aa).

The active-site Schiff-base intermediate with DXP is the Lys-104. Residues Gly-165, 192 to 193 (AG), and 214 to 215 (NT) contribute to the 1-deoxy-D-xylulose 5-phosphate site.

The protein belongs to the ThiG family. Homotetramer. Forms heterodimers with either ThiH or ThiS.

It localises to the cytoplasm. The catalysed reaction is [ThiS sulfur-carrier protein]-C-terminal-Gly-aminoethanethioate + 2-iminoacetate + 1-deoxy-D-xylulose 5-phosphate = [ThiS sulfur-carrier protein]-C-terminal Gly-Gly + 2-[(2R,5Z)-2-carboxy-4-methylthiazol-5(2H)-ylidene]ethyl phosphate + 2 H2O + H(+). The protein operates within cofactor biosynthesis; thiamine diphosphate biosynthesis. Functionally, catalyzes the rearrangement of 1-deoxy-D-xylulose 5-phosphate (DXP) to produce the thiazole phosphate moiety of thiamine. Sulfur is provided by the thiocarboxylate moiety of the carrier protein ThiS. In vitro, sulfur can be provided by H(2)S. The protein is Thiazole synthase of Burkholderia mallei (strain ATCC 23344).